Reading from the N-terminus, the 442-residue chain is Putative mannan endo-1,6-alpha-mannosidase C1198.07c (442 aa).

An N-terminal signal peptide occupies residues 1-19 (MRYLSFFFEFFFLFSFAFA). Residues 20–421 (FDFDVTSDDS…TPATKSDKGW (402 aa)) are Lumenal-facing. N-linked (GlcNAc...) asparagine glycans are attached at residues asparagine 75, asparagine 124, asparagine 193, asparagine 229, asparagine 254, asparagine 257, and asparagine 356. The chain crosses the membrane as a helical span at residues 422–442 (AGFLTFAFSFVFLLFSIWLYF).

It belongs to the glycosyl hydrolase 76 family.

It is found in the endoplasmic reticulum membrane. It catalyses the reaction Random hydrolysis of (1-&gt;6)-alpha-D-mannosidic linkages in unbranched (1-&gt;6)-mannans.. The polypeptide is Putative mannan endo-1,6-alpha-mannosidase C1198.07c (Schizosaccharomyces pombe (strain 972 / ATCC 24843) (Fission yeast)).